The sequence spans 803 residues: MKLTLSWLKDHLDTDEPLEKLADKLTMIGLEVEGIEDKAKVLAPFTIAKVLTAAKHPNADKLQVCTVDVGDGAAPVQVVCGAPNARAGLVTVFAPPGTYIPAKDFTLGIGNIRGVESRGMLCSAAELQISEDHDGIIELPADAPVGAAYAAWAGLGDPVLDINLTPNRQDCAGVHGIARDLAAADMGKFKDPGIKPIKGEFPCPVSVTVEDSTLCPGFALRLVKGVKNGPSPEWLQKRLTAIGLRPINALVDITNYLTFDRSRPLHVFDAAKVKGNLVVRRAKDGETLLALDGRTYTLDSSVCVIADDHGVESLAGIMGGELSGCSAETTDVLIESALWNEINIAQSGRKLGINTDARYRFERGVDPAFMLPGLELATKLVMEFCGGTPSDVVVVGNPFADDKIIDFPLAEVKRLAGIEVSLTEIRRILNHLGFTVVGQAPVVKVAVPSWRSDVHGKADIVEEIVRIVGVDKVPLTPFERGDAPRKPVLTQIQNRTRRAKRALAARGLTEAVTWSFISKPFAEAFGGGQPELALANPIASDLSDMRPSLLPGLIAAAQANADRGSPDLALFEVGQVFKGDRPQDQFMAASGVRRGVASSAGLGRHWSGSAQATALDAKADAFAVLAAAGAPMAGLQIATNKLPAWLHPGRSGAIQIGPQNVLGYFGELHPRVLEQLGADGPLVAFEVILEKIPDPKQRPTRAKPALELSAFHPVSRDFAFIVDRKVAVADIVRAAQGVDKKLITSVSVFDVYEGKGIDPDKKSVAIAVTLQPRDKTMTDQEIEAVAAKIVAEVTKKTGGSLRG.

The 112-residue stretch at 39–150 (AKVLAPFTIA…ADAPVGAAYA (112 aa)) folds into the tRNA-binding domain. One can recognise a B5 domain in the interval 400-475 (ADDKIIDFPL…RIVGVDKVPL (76 aa)). 4 residues coordinate Mg(2+): Asp-453, Asp-459, Glu-462, and Glu-463. The 94-residue stretch at 709–802 (SAFHPVSRDF…VTKKTGGSLR (94 aa)) folds into the FDX-ACB domain.

It belongs to the phenylalanyl-tRNA synthetase beta subunit family. Type 1 subfamily. In terms of assembly, tetramer of two alpha and two beta subunits. It depends on Mg(2+) as a cofactor.

Its subcellular location is the cytoplasm. It carries out the reaction tRNA(Phe) + L-phenylalanine + ATP = L-phenylalanyl-tRNA(Phe) + AMP + diphosphate + H(+). The chain is Phenylalanine--tRNA ligase beta subunit from Rhodopseudomonas palustris (strain ATCC BAA-98 / CGA009).